The primary structure comprises 332 residues: NADH-quinone oxidoreductase subunit H (332 aa).

9 consecutive transmembrane segments (helical) span residues 4 to 24 (FAFF…IFAS), 44 to 64 (IGPD…MIKL), 78 to 98 (FIFA…LAAI), 120 to 140 (VALL…FLGG), 165 to 185 (VGAL…LVDI), 194 to 214 (FSWL…ALFI), 255 to 275 (IAGA…FWII), 279 to 299 (IMMI…RAAF), and 312 to 332 (YLIL…AVLL).

The protein belongs to the complex I subunit 1 family. In terms of assembly, NDH-1 is composed of 14 different subunits. Subunits NuoA, H, J, K, L, M, N constitute the membrane sector of the complex.

It localises to the cell inner membrane. The enzyme catalyses a quinone + NADH + 5 H(+)(in) = a quinol + NAD(+) + 4 H(+)(out). In terms of biological role, NDH-1 shuttles electrons from NADH, via FMN and iron-sulfur (Fe-S) centers, to quinones in the respiratory chain. The immediate electron acceptor for the enzyme in this species is believed to be ubiquinone. Couples the redox reaction to proton translocation (for every two electrons transferred, four hydrogen ions are translocated across the cytoplasmic membrane), and thus conserves the redox energy in a proton gradient. This subunit may bind ubiquinone. The protein is NADH-quinone oxidoreductase subunit H of Campylobacter jejuni (strain RM1221).